The primary structure comprises 120 residues: Large ribosomal subunit protein eL18 (120 aa).

This sequence belongs to the eukaryotic ribosomal protein eL18 family.

The chain is Large ribosomal subunit protein eL18 from Methanococcus maripaludis (strain DSM 14266 / JCM 13030 / NBRC 101832 / S2 / LL).